The primary structure comprises 131 residues: Small ribosomal subunit protein bS6 (131 aa).

Residues 98 to 131 (EASPMVKAKDERRERRDDFANETADDSDAGDSEE) form a disordered region. Basic and acidic residues predominate over residues 104–116 (KAKDERRERRDDF). The span at 120 to 131 (TADDSDAGDSEE) shows a compositional bias: acidic residues.

The protein belongs to the bacterial ribosomal protein bS6 family.

In terms of biological role, binds together with bS18 to 16S ribosomal RNA. In Enterobacter sp. (strain 638), this protein is Small ribosomal subunit protein bS6.